The sequence spans 189 residues: Chitin synthase 1 (189 aa).

The protein belongs to the chitin synthase family.

It localises to the cell membrane. The catalysed reaction is [(1-&gt;4)-N-acetyl-beta-D-glucosaminyl](n) + UDP-N-acetyl-alpha-D-glucosamine = [(1-&gt;4)-N-acetyl-beta-D-glucosaminyl](n+1) + UDP + H(+). Its function is as follows. Polymerizes chitin, a structural polymer of the cell wall and septum, by transferring the sugar moiety of UDP-GlcNAc to the non-reducing end of the growing chitin polymer. This chain is Chitin synthase 1 (CHS1), found in Schizophyllum commune (Split gill fungus).